The sequence spans 426 residues: Gamma-glutamyl phosphate reductase (426 aa).

This sequence belongs to the gamma-glutamyl phosphate reductase family.

The protein localises to the cytoplasm. The enzyme catalyses L-glutamate 5-semialdehyde + phosphate + NADP(+) = L-glutamyl 5-phosphate + NADPH + H(+). The protein operates within amino-acid biosynthesis; L-proline biosynthesis; L-glutamate 5-semialdehyde from L-glutamate: step 2/2. Its function is as follows. Catalyzes the NADPH-dependent reduction of L-glutamate 5-phosphate into L-glutamate 5-semialdehyde and phosphate. The product spontaneously undergoes cyclization to form 1-pyrroline-5-carboxylate. This Delftia acidovorans (strain DSM 14801 / SPH-1) protein is Gamma-glutamyl phosphate reductase.